A 552-amino-acid chain; its full sequence is Glutamyl-tRNA reductase 1, chloroplastic (552 aa).

Residues 150–153 (TCNR), serine 210, 215–217 (EGQ), and glutamine 221 each bind substrate. The Nucleophile role is filled by cysteine 151. Residue 292–297 (GAGKMG) participates in NADP(+) binding.

This sequence belongs to the glutamyl-tRNA reductase family. As to expression, primarily in cotyledons and hypocotyls of greening cucumber seedlings.

It localises to the plastid. Its subcellular location is the chloroplast. It catalyses the reaction (S)-4-amino-5-oxopentanoate + tRNA(Glu) + NADP(+) = L-glutamyl-tRNA(Glu) + NADPH + H(+). It functions in the pathway porphyrin-containing compound metabolism; protoporphyrin-IX biosynthesis; 5-aminolevulinate from L-glutamyl-tRNA(Glu): step 1/2. Catalyzes the NADPH-dependent reduction of glutamyl-tRNA(Glu) to glutamate 1-semialdehyde (GSA). The sequence is that of Glutamyl-tRNA reductase 1, chloroplastic (HEMA1) from Cucumis sativus (Cucumber).